A 230-amino-acid chain; its full sequence is Pyridoxine/pyridoxamine 5'-phosphate oxidase (230 aa).

Residues 21 to 24 (RVEY) and K87 contribute to the substrate site. FMN-binding positions include 82 to 87 (RSVLCK), 97 to 98 (YT), K104, and Q126. Positions 144, 148, and 152 each coordinate substrate. FMN contacts are provided by residues 161–162 (QS) and W207. 213–215 (RVH) provides a ligand contact to substrate. FMN is bound at residue R217.

The protein belongs to the pyridoxamine 5'-phosphate oxidase family. As to quaternary structure, homodimer. FMN is required as a cofactor.

The catalysed reaction is pyridoxamine 5'-phosphate + O2 + H2O = pyridoxal 5'-phosphate + H2O2 + NH4(+). The enzyme catalyses pyridoxine 5'-phosphate + O2 = pyridoxal 5'-phosphate + H2O2. It functions in the pathway cofactor metabolism; pyridoxal 5'-phosphate salvage; pyridoxal 5'-phosphate from pyridoxamine 5'-phosphate: step 1/1. Its pathway is cofactor metabolism; pyridoxal 5'-phosphate salvage; pyridoxal 5'-phosphate from pyridoxine 5'-phosphate: step 1/1. Functionally, catalyzes the oxidation of either pyridoxine 5'-phosphate (PNP) or pyridoxamine 5'-phosphate (PMP) into pyridoxal 5'-phosphate (PLP). The chain is Pyridoxine/pyridoxamine 5'-phosphate oxidase from Mycolicibacterium smegmatis (strain ATCC 700084 / mc(2)155) (Mycobacterium smegmatis).